A 194-amino-acid polypeptide reads, in one-letter code: Endoribonuclease YbeY (194 aa).

Zn(2+)-binding residues include His-151, His-155, and His-161.

Belongs to the endoribonuclease YbeY family. Requires Zn(2+) as cofactor.

Its subcellular location is the cytoplasm. Its function is as follows. Single strand-specific metallo-endoribonuclease involved in late-stage 70S ribosome quality control and in maturation of the 3' terminus of the 16S rRNA. This chain is Endoribonuclease YbeY, found in Gloeobacter violaceus (strain ATCC 29082 / PCC 7421).